Here is a 206-residue protein sequence, read N- to C-terminus: Small ribosomal subunit protein uS4 (206 aa).

The segment at 23–47 (AKSPLNRREYGPGQHGQRRKGKLSD) is disordered. The S4 RNA-binding domain maps to 94 to 157 (RRLDAVIYRA…RQLAIVLESV (64 aa)).

It belongs to the universal ribosomal protein uS4 family. Part of the 30S ribosomal subunit. Contacts protein S5. The interaction surface between S4 and S5 is involved in control of translational fidelity.

In terms of biological role, one of the primary rRNA binding proteins, it binds directly to 16S rRNA where it nucleates assembly of the body of the 30S subunit. With S5 and S12 plays an important role in translational accuracy. The sequence is that of Small ribosomal subunit protein uS4 from Paracoccus denitrificans (strain Pd 1222).